A 266-amino-acid chain; its full sequence is Putative carbamate hydrolase RutD (266 aa).

The protein belongs to the AB hydrolase superfamily. Hydrolase RutD family.

It catalyses the reaction carbamate + 2 H(+) = NH4(+) + CO2. In terms of biological role, involved in pyrimidine catabolism. May facilitate the hydrolysis of carbamate, a reaction that can also occur spontaneously. This is Putative carbamate hydrolase RutD from Acinetobacter baylyi (strain ATCC 33305 / BD413 / ADP1).